Here is a 967-residue protein sequence, read N- to C-terminus: Phosphoenolpyruvate carboxylase (967 aa).

Position 11 is a phosphoserine (serine 11). Active-site residues include histidine 172 and lysine 601.

It belongs to the PEPCase type 1 family. As to quaternary structure, homotetramer. It depends on Mg(2+) as a cofactor.

Its subcellular location is the cytoplasm. It carries out the reaction oxaloacetate + phosphate = phosphoenolpyruvate + hydrogencarbonate. The protein operates within photosynthesis; C3 acid pathway. With respect to regulation, by light-reversible phosphorylation. In terms of biological role, through the carboxylation of phosphoenolpyruvate (PEP) it forms oxaloacetate, a four-carbon dicarboxylic acid source for the tricarboxylic acid cycle. This is Phosphoenolpyruvate carboxylase (PPCA1) from Flaveria pringlei.